A 247-amino-acid chain; its full sequence is Chalcone--flavanone isomerase (247 aa).

Substrate contacts are provided by threonine 56, asparagine 121, and serine 198. Basic and acidic residues predominate over residues 223–235 (ENKVEEDATKTDQ). A disordered region spans residues 223–247 (ENKVEEDATKTDQEEANDLSLAKEN).

This sequence belongs to the chalcone isomerase family.

The catalysed reaction is a chalcone = a flavanone.. It functions in the pathway secondary metabolite biosynthesis; flavonoid biosynthesis. Catalyzes the intramolecular cyclization of bicyclic chalcones into tricyclic (S)-flavanones. Responsible for the isomerization of 4,2',4',6'-tetrahydroxychalcone (also termed chalcone) into naringenin. In Raphanus sativus (Radish), this protein is Chalcone--flavanone isomerase (CHI).